A 413-amino-acid polypeptide reads, in one-letter code: Arginine biosynthesis bifunctional protein ArgJ (413 aa).

The substrate site is built by threonine 160, lysine 186, threonine 197, glutamate 284, asparagine 408, and serine 413. Residue threonine 197 is the Nucleophile of the active site.

It belongs to the ArgJ family. In terms of assembly, heterotetramer of two alpha and two beta chains.

Its subcellular location is the cytoplasm. It carries out the reaction N(2)-acetyl-L-ornithine + L-glutamate = N-acetyl-L-glutamate + L-ornithine. The catalysed reaction is L-glutamate + acetyl-CoA = N-acetyl-L-glutamate + CoA + H(+). It functions in the pathway amino-acid biosynthesis; L-arginine biosynthesis; L-ornithine and N-acetyl-L-glutamate from L-glutamate and N(2)-acetyl-L-ornithine (cyclic): step 1/1. The protein operates within amino-acid biosynthesis; L-arginine biosynthesis; N(2)-acetyl-L-ornithine from L-glutamate: step 1/4. Its function is as follows. Catalyzes two activities which are involved in the cyclic version of arginine biosynthesis: the synthesis of N-acetylglutamate from glutamate and acetyl-CoA as the acetyl donor, and of ornithine by transacetylation between N(2)-acetylornithine and glutamate. This is Arginine biosynthesis bifunctional protein ArgJ from Burkholderia mallei (strain ATCC 23344).